The primary structure comprises 556 residues: Myb/SANT-like DNA-binding domain-containing protein 2 (556 aa).

Polar residues-rich tracts occupy residues 1–10 and 36–45; these read MAASCGSSQL and GNPSLSDPST. The disordered stretch occupies residues 1–82; the sequence is MAASCGSSQL…GGASPSVSFS (82 aa). The span at 56–74 shows a compositional bias: gly residues; it reads PAAGGAGLGGGGAAGGRGG. Residues 99–169 enclose the Myb-like domain; sequence SWTPAETNAL…QCRERIKTLR (71 aa). Residues 431 to 458 form a disordered region; sequence PRSPLAEPRGADPSNETPGELEVPSPQA.

The polypeptide is Myb/SANT-like DNA-binding domain-containing protein 2 (MSANTD2) (Gallus gallus (Chicken)).